A 1363-amino-acid chain; its full sequence is Neurexin-1 (1363 aa).

Residues 1–1287 (SKRRDMTVFS…EVIRESSSTT (1287 aa)) are Extracellular-facing. N49 is a glycosylation site (N-linked (GlcNAc...) asparagine). One can recognise an EGF-like 1 domain in the interval 67-105 (QSRLCAREDVCLNGGVCSVLNDQAVCDCSQTGFRGKDCS). Disulfide bonds link C71–C83, C77–C92, and C94–C104. 2 consecutive Laminin G-like domains span residues 132 to 329 (IATF…AFKC) and 336 to 528 (DPIT…KPSC). Ca(2+) contacts are provided by D178, L195, and M263. 5 cysteine pairs are disulfide-bonded: C293-C329, C499-C528, C536-C547, C541-C556, and C558-C568. In terms of domain architecture, EGF-like 2 spans 532-569 (TAKPCLSNPCKNNGVCRDGWNRYVCDCSGTGYLGRSCE). Laminin G-like domains follow at residues 574 to 747 (ILSY…IDYC) and 761 to 936 (DPVT…ERGC). A glycan (N-linked (GlcNAc...) asparagine) is linked at N646. 4 disulfide bridges follow: C908–C936, C943–C954, C948–C963, and C965–C975. Residues 939-976 (PSTTCQEDSCANQGVCLQQWDGFSCDCSMTSFSGPLCN) enclose the EGF-like 3 domain. In terms of domain architecture, Laminin G-like 5 spans 982-1180 (YIFSKGGGQI…DANIVIEGNV (199 aa)). N1079 is a glycosylation site (N-linked (GlcNAc...) asparagine). The interval 1244-1280 (CPSDDEDIDPCEPSSGGLANPTRAGGGREYPGSSEVI) is disordered. A helical membrane pass occupies residues 1288-1308 (GMVVGIVAAAALCILILLYAM). The Cytoplasmic portion of the chain corresponds to 1309-1363 (YKYRNRDEGSYHVDESRNYISNSAQSNGAVIKEKQPNSAKSSNKNKKNKDKEYYV). Residues 1330–1363 (NSAQSNGAVIKEKQPNSAKSSNKNKKNKDKEYYV) form a disordered region.

It belongs to the neurexin family. As to quaternary structure, the cytoplasmic C-terminal region binds to CASK. The laminin G-like domain 1 binds to NXPH1. Specific isoforms bind to alpha-dystroglycan and to alpha-latrotoxin. Post-translationally, N- and O-glycosylated.

It localises to the membrane. Functionally, neuronal cell surface protein that may be involved in cell recognition and cell adhesion. May mediate intracellular signaling. The polypeptide is Neurexin-1 (NRXN1) (Gallus gallus (Chicken)).